A 278-amino-acid chain; its full sequence is 2-dehydro-3-deoxyphosphooctonate aldolase (278 aa).

It belongs to the KdsA family.

It is found in the cytoplasm. It catalyses the reaction D-arabinose 5-phosphate + phosphoenolpyruvate + H2O = 3-deoxy-alpha-D-manno-2-octulosonate-8-phosphate + phosphate. The protein operates within carbohydrate biosynthesis; 3-deoxy-D-manno-octulosonate biosynthesis; 3-deoxy-D-manno-octulosonate from D-ribulose 5-phosphate: step 2/3. It participates in bacterial outer membrane biogenesis; lipopolysaccharide biosynthesis. This chain is 2-dehydro-3-deoxyphosphooctonate aldolase, found in Koribacter versatilis (strain Ellin345).